The chain runs to 201 residues: Glycerol-3-phosphate acyltransferase (201 aa).

5 helical membrane-spanning segments follow: residues 5 to 25 (LLGA…FGVV), 55 to 75 (KMGV…ILVA), 87 to 107 (FWVT…VWLG), 118 to 138 (LGIF…GYAV), and 164 to 184 (TYGP…LIFV).

It belongs to the PlsY family. As to quaternary structure, probably interacts with PlsX.

The protein localises to the cell inner membrane. The catalysed reaction is an acyl phosphate + sn-glycerol 3-phosphate = a 1-acyl-sn-glycero-3-phosphate + phosphate. It participates in lipid metabolism; phospholipid metabolism. Its function is as follows. Catalyzes the transfer of an acyl group from acyl-phosphate (acyl-PO(4)) to glycerol-3-phosphate (G3P) to form lysophosphatidic acid (LPA). This enzyme utilizes acyl-phosphate as fatty acyl donor, but not acyl-CoA or acyl-ACP. The protein is Glycerol-3-phosphate acyltransferase of Anaeromyxobacter dehalogenans (strain 2CP-1 / ATCC BAA-258).